The primary structure comprises 542 residues: Isocitrate lyase (542 aa).

102–104 (SGW) is a binding site for substrate. D170 contacts Mg(2+). C208 acts as the Proton acceptor in catalysis. Substrate contacts are provided by residues 209 to 210 (GH), R245, 428 to 432 (NLSPS), and T462.

It belongs to the isocitrate lyase/PEP mutase superfamily. Isocitrate lyase family. Homotetramer. It depends on Mg(2+) as a cofactor.

The protein localises to the glyoxysome. The enzyme catalyses D-threo-isocitrate = glyoxylate + succinate. It carries out the reaction (2S,3R)-3-hydroxybutane-1,2,3-tricarboxylate = pyruvate + succinate. The protein operates within carbohydrate metabolism; glyoxylate cycle; (S)-malate from isocitrate: step 1/2. In terms of biological role, catalyzes the formation of succinate and glyoxylate from isocitrate, a key step of the glyoxylate cycle, which operates as an anaplerotic route for replenishing the tricarboxylic acid cycle. Required for growth on ethanol or acetate, but dispensable when fermentable carbon sources are available. Also acts on 2-methylisocitrate. The chain is Isocitrate lyase from Kluyveromyces lactis (strain ATCC 8585 / CBS 2359 / DSM 70799 / NBRC 1267 / NRRL Y-1140 / WM37) (Yeast).